The following is a 726-amino-acid chain: Transferrin (726 aa).

A signal peptide spans 1 to 16 (MLLCLTLLFSASAVLA). Transferrin-like domains lie at 29 to 367 (YKVC…ERDT) and 374 to 719 (VRFC…VIRA). Disulfide bonds link cysteine 32–cysteine 63 and cysteine 41–cysteine 54. 2 residues coordinate Fe(3+): aspartate 78 and tyrosine 111. 4 cysteine pairs are disulfide-bonded: cysteine 135–cysteine 231, cysteine 184–cysteine 210, cysteine 207–cysteine 216, and cysteine 274–cysteine 287. Positions 137, 141, 143, and 144 each coordinate hydrogencarbonate. An N-linked (GlcNAc...) asparagine glycan is attached at asparagine 162. Tyrosine 225 contributes to the Fe(3+) binding site. Residues asparagine 337 and asparagine 358 are each glycosylated (N-linked (GlcNAc...) asparagine). 2 cysteine pairs are disulfide-bonded: cysteine 377–cysteine 414 and cysteine 387–cysteine 405. 2 residues coordinate Fe(3+): aspartate 429 and tyrosine 457. Cysteine 481 and cysteine 562 are disulfide-bonded. Residues threonine 483, arginine 487, alanine 489, and glycine 490 each coordinate hydrogencarbonate. Tyrosine 573 and histidine 642 together coordinate Fe(3+).

It belongs to the transferrin family.

The protein localises to the secreted. In terms of biological role, transferrins are iron binding transport proteins which bind Fe(3+) ion in association with the binding of an anion, usually bicarbonate. The chain is Transferrin from Blaberus discoidalis (Tropical cockroach).